The primary structure comprises 390 residues: Type II methyltransferase M.SacI (390 aa).

Residues 5-371 (LPVISLFSGA…RALMEQLGYL (367 aa)) form the SAM-dependent MTase C5-type domain. Residue cysteine 96 is part of the active site.

This sequence belongs to the class I-like SAM-binding methyltransferase superfamily. C5-methyltransferase family.

The enzyme catalyses a 2'-deoxycytidine in DNA + S-adenosyl-L-methionine = a 5-methyl-2'-deoxycytidine in DNA + S-adenosyl-L-homocysteine + H(+). In terms of biological role, a beta methylase recognizes the double-stranded sequence 5'-GAGCTC-3', methylates C-4 on both strands, and protects the DNA from cleavage by the SacI endonuclease. The sequence is that of Type II methyltransferase M.SacI from Streptomyces achromogenes.